Here is a 458-residue protein sequence, read N- to C-terminus: Cysteine--tRNA ligase (458 aa).

Cysteine 29 lines the Zn(2+) pocket. The short motif at 31–41 (MTVYDLCHLGH) is the 'HIGH' region element. Zn(2+)-binding residues include cysteine 213, histidine 238, and glutamate 242. Residues 270 to 274 (KMSKS) carry the 'KMSKS' region motif. An ATP-binding site is contributed by lysine 273.

Belongs to the class-I aminoacyl-tRNA synthetase family. In terms of assembly, monomer. Zn(2+) is required as a cofactor.

Its subcellular location is the cytoplasm. The enzyme catalyses tRNA(Cys) + L-cysteine + ATP = L-cysteinyl-tRNA(Cys) + AMP + diphosphate. The polypeptide is Cysteine--tRNA ligase (Acidovorax ebreus (strain TPSY) (Diaphorobacter sp. (strain TPSY))).